A 387-amino-acid chain; its full sequence is Galactokinase (387 aa).

E33–D36 is a substrate binding site. Residues S67 and G124–S130 each bind ATP. Residues S130 and E162 each contribute to the Mg(2+) site. D174 functions as the Proton acceptor in the catalytic mechanism. Y224 contacts substrate.

This sequence belongs to the GHMP kinase family. GalK subfamily.

Its subcellular location is the cytoplasm. The catalysed reaction is alpha-D-galactose + ATP = alpha-D-galactose 1-phosphate + ADP + H(+). The protein operates within carbohydrate metabolism; galactose metabolism. In terms of biological role, catalyzes the transfer of the gamma-phosphate of ATP to D-galactose to form alpha-D-galactose-1-phosphate (Gal-1-P). The sequence is that of Galactokinase from Ligilactobacillus salivarius (strain UCC118) (Lactobacillus salivarius).